The following is a 359-amino-acid chain: Putative nucleotidyltransferase MAB21L1 (359 aa).

A ribonucleoside 5'-triphosphate is bound by residues 23 to 24 and 63 to 66; these read RK and YEGL. Mg(2+) contacts are provided by glutamate 73 and glutamate 75. Residues lysine 248 and 252–255 each bind a ribonucleoside 5'-triphosphate; that span reads SLLK.

This sequence belongs to the mab-21 family. Monomer. Homodecamer; composed of 2 back to back homopentamers. The protein may exist as monomer in solution and oiligomerizes upon ligand binding.

The protein localises to the nucleus. Putative nucleotidyltransferase required for several aspects of embryonic development including normal development of the eye. It is unclear whether it displays nucleotidyltransferase activity in vivo. Binds single-stranded RNA (ssRNA). This Xenopus tropicalis (Western clawed frog) protein is Putative nucleotidyltransferase MAB21L1 (mab21l1).